The chain runs to 219 residues: Proteasome subunit beta type-9 (219 aa).

A propeptide spans 1-20 (removed in mature form); it reads MLRAGAPTAGSFRTEEVHTG. The active-site Nucleophile is the Thr21. An N6-acetyllysine mark is found at Lys53 and Lys109.

This sequence belongs to the peptidase T1B family. As to quaternary structure, the 26S proteasome consists of a 20S proteasome core and two 19S regulatory subunits. The 20S proteasome core is composed of 28 subunits that are arranged in four stacked rings, resulting in a barrel-shaped structure. The two end rings are each formed by seven alpha subunits, and the two central rings are each formed by seven beta subunits. The catalytic chamber with the active sites is on the inside of the barrel. Component of the immunoproteasome, where it displaces the equivalent housekeeping subunit PSMB6. Component of the spermatoproteasome, a form of the proteasome specifically found in testis. Post-translationally, autocleaved. The resulting N-terminal Thr residue of the mature subunit is responsible for the nucleophile proteolytic activity.

The protein resides in the cytoplasm. It is found in the nucleus. The catalysed reaction is Cleavage of peptide bonds with very broad specificity.. Its function is as follows. The proteasome is a multicatalytic proteinase complex which is characterized by its ability to cleave peptides with Arg, Phe, Tyr, Leu, and Glu adjacent to the leaving group at neutral or slightly basic pH. The proteasome has an ATP-dependent proteolytic activity. This subunit is involved in antigen processing to generate class I binding peptides. This chain is Proteasome subunit beta type-9 (Psmb9), found in Mus musculus bactrianus (Southwestern Asian house mouse).